The following is a 448-amino-acid chain: Chromosomal replication initiator protein DnaA (448 aa).

The tract at residues 1 to 85 is domain I, interacts with DnaA modulators; it reads MHDNLPQIWE…EVHIVVPSEE (85 aa). The segment at 85–110 is domain II; it reads ERVGDTQNINARRSNAQSPIMGNSPL. Residues 111-327 are domain III, AAA+ region; sequence ILNPKYTFDT…GALIRIVAYS (217 aa). ATP-binding residues include G155, G157, K158, and T159. The segment at 328–448 is domain IV, binds dsDNA; that stretch reads SLTNSEVTVE…DAIIKELKSD (121 aa).

It belongs to the DnaA family. As to quaternary structure, oligomerizes as a right-handed, spiral filament on DNA at oriC.

Its subcellular location is the cytoplasm. Plays an essential role in the initiation and regulation of chromosomal replication. ATP-DnaA binds to the origin of replication (oriC) to initiate formation of the DNA replication initiation complex once per cell cycle. Binds the DnaA box (a 9 base pair repeat at the origin) and separates the double-stranded (ds)DNA. Forms a right-handed helical filament on oriC DNA; dsDNA binds to the exterior of the filament while single-stranded (ss)DNA is stabiized in the filament's interior. The ATP-DnaA-oriC complex binds and stabilizes one strand of the AT-rich DNA unwinding element (DUE), permitting loading of DNA polymerase. After initiation quickly degrades to an ADP-DnaA complex that is not apt for DNA replication. Binds acidic phospholipids. The protein is Chromosomal replication initiator protein DnaA of Alkaliphilus metalliredigens (strain QYMF).